The following is a 356-amino-acid chain: Golgi-resident adenosine 3',5'-bisphosphate 3'-phosphatase (356 aa).

Methionine 1 carries the post-translational modification N-acetylmethionine. Residues 1-12 are Cytoplasmic-facing; sequence MAPMGIRLSPLG. Residues 13–33 form a helical membrane-spanning segment; that stretch reads VAVFFLLGLGVLYHLYSGFLA. Residues 34–356 are Lumenal-facing; it reads GRFSLFGLGS…KLPDLEKSGH (323 aa). The segment at 84 to 104 is disordered; sequence ESNVLHEKSKGKTREGADDKM. Aspartate 108 acts as the Proton acceptor in catalysis. Residues glutamate 131, aspartate 172, leucine 174, and aspartate 175 each contribute to the Mg(2+) site. The Proton acceptor role is filled by threonine 177. AMP is bound by residues serine 240 and histidine 243. An N-linked (GlcNAc...) asparagine glycan is attached at asparagine 257. AMP-binding residues include glycine 266 and lysine 270. Mg(2+) is bound at residue aspartate 298.

It belongs to the inositol monophosphatase superfamily. Requires Mg(2+) as cofactor. In terms of processing, N-glycosylated. Contains N-linked glycan resistant to endoglycosydase H.

Its subcellular location is the golgi apparatus. It localises to the trans-Golgi network membrane. It carries out the reaction adenosine 3',5'-bisphosphate + H2O = AMP + phosphate. It functions in the pathway sulfur metabolism. With respect to regulation, strongly inhibited by lithium. Functionally, exhibits 3'-nucleotidase activity toward adenosine 3',5'-bisphosphate (PAP), namely hydrolyzes adenosine 3',5'-bisphosphate into adenosine 5'-monophosphate (AMP) and a phosphate. May play a role in the formation of skeletal elements derived through endochondral ossification, possibly by clearing adenosine 3',5'-bisphosphate produced by Golgi sulfotransferases during glycosaminoglycan sulfation. Has no activity toward 3'-phosphoadenosine 5'-phosphosulfate (PAPS) or inositol phosphate (IP) substrates including I(1)P, I(1,4)P2, I(1,3,4)P3, I(1,4,5)P3 and I(1,3,4,5)P4. The sequence is that of Golgi-resident adenosine 3',5'-bisphosphate 3'-phosphatase from Mus musculus (Mouse).